Reading from the N-terminus, the 448-residue chain is uncharacterized protein (448 aa).

A compositionally biased stretch (basic and acidic residues) spans 187-198; that stretch reads SKGDRGDADDRG. 3 disordered regions span residues 187–221, 243–270, and 291–361; these read SKGD…LPTR, LQVP…GATM, and LSGL…LPNG. A compositionally biased stretch (low complexity) spans 243–261; sequence LQVPGGTSAAIPSASSTPS. The span at 307–334 shows a compositional bias: basic and acidic residues; it reads FDERGQEVRDPADYEHSNEPDERRADDR.

It to M.tuberculosis Rv0025 and Rv0739.

This is an uncharacterized protein from Mycobacterium tuberculosis (strain ATCC 25618 / H37Rv).